A 350-amino-acid polypeptide reads, in one-letter code: S-adenosylmethionine:tRNA ribosyltransferase-isomerase (350 aa).

This sequence belongs to the QueA family. Monomer.

It localises to the cytoplasm. It catalyses the reaction 7-aminomethyl-7-carbaguanosine(34) in tRNA + S-adenosyl-L-methionine = epoxyqueuosine(34) in tRNA + adenine + L-methionine + 2 H(+). The protein operates within tRNA modification; tRNA-queuosine biosynthesis. Its function is as follows. Transfers and isomerizes the ribose moiety from AdoMet to the 7-aminomethyl group of 7-deazaguanine (preQ1-tRNA) to give epoxyqueuosine (oQ-tRNA). The protein is S-adenosylmethionine:tRNA ribosyltransferase-isomerase of Aliivibrio salmonicida (strain LFI1238) (Vibrio salmonicida (strain LFI1238)).